We begin with the raw amino-acid sequence, 592 residues long: uncharacterized protein (592 aa).

Positions 1–23 (MRKAPLLRFTLASLALACSQAFA) are cleaved as a signal peptide. Catalysis depends on Ser-37, which acts as the Nucleophile. Catalysis depends on residues Asp-294 and His-297. An Autotransporter domain is found at 334 to 592 (HQDELRNQWQ…PDPGEPGGKP (259 aa)). The interval 572 to 592 (FTLTGYTPHTAPDPGEPGGKP) is disordered.

It belongs to the 'GDSL' lipolytic enzyme family.

This is an uncharacterized protein from Pseudomonas putida (Arthrobacter siderocapsulatus).